The sequence spans 636 residues: Dehydrogenase ARMGADRAFT_1018426 (636 aa).

A signal peptide spans methionine 1–serine 19. Residues threonine 49 to alanine 50 and glutamate 70 to glycine 71 contribute to the FAD site. Residue asparagine 99 is glycosylated (N-linked (GlcNAc...) asparagine). FAD-binding positions include tryptophan 104 and asparagine 134–threonine 137. Residue asparagine 253 is glycosylated (N-linked (GlcNAc...) asparagine). Residue valine 280 participates in FAD binding. Residues asparagine 333, asparagine 380, asparagine 394, and asparagine 498 are each glycosylated (N-linked (GlcNAc...) asparagine). Residue histidine 570 is the Proton acceptor of the active site. FAD is bound by residues alanine 603 and proline 614 to serine 615.

The protein belongs to the GMC oxidoreductase family. FAD is required as a cofactor.

It functions in the pathway secondary metabolite biosynthesis. Dehydrogenase, part of the gene cluster that mediates the biosynthesis of melleolides, a range of antifungal and phytotoxic polyketide derivatives composed of an orsellinic acid (OA) moiety esterified to various sesquiterpene alcohols. The first step in melleolides biosynthesis is performed by the delta(6)-protoilludene synthase PRO1 which catalyzes the cyclization of farnesyl diphosphate to protoilludene. The orsellinic acid synthase armB produces OA by condensing acetyl-CoA with 3 malonyl-CoA units in a three-round chain elongation reaction folowed by a C2-C7 ring closure. ArmB further catalyzes the trans-esterification of OA to the various sesquiterpene alcohols resulting from the hydroxylation of protoilludene. The melleolides cluster also includes 5 cytochrome P450 monooxygenases, 4 NAD(+)-dependent oxidoreductases, one flavin-dependent oxidoreductase, and one O-methyltransferase. The cytochrome P450 monooxygenases may be involved in protoilludene hydroxylation to elaborate melleolides with multiple alcohol groups, such as melleolide D, which carries alcohol functionalities at C-4, C-5, C-10, and C-13. The role of the NAD(+)-dependent enzymes remains unknown. Numerous melleolides, including arnamial, show 5'-O-methylation of the aromatic moiety which may be catalyzed by the methyltransferase encoded in the cluster. The flavin-dependent oxidoreductase might represent the dehydrogenase yielding the aldehyde in position 1 of arnamial and other melleolides. Finally, several halogenase localized outside of the cluster, are able to catalyze the transfer of a single chlorine atom to the melleolide backbone, resulting in a 6'-chloromelleolide product. This is Dehydrogenase ARMGADRAFT_1018426 from Armillaria gallica (Bulbous honey fungus).